The primary structure comprises 603 residues: Proline--tRNA ligase (603 aa).

The protein belongs to the class-II aminoacyl-tRNA synthetase family. ProS type 1 subfamily. Homodimer.

Its subcellular location is the cytoplasm. It catalyses the reaction tRNA(Pro) + L-proline + ATP = L-prolyl-tRNA(Pro) + AMP + diphosphate. Catalyzes the attachment of proline to tRNA(Pro) in a two-step reaction: proline is first activated by ATP to form Pro-AMP and then transferred to the acceptor end of tRNA(Pro). As ProRS can inadvertently accommodate and process non-cognate amino acids such as alanine and cysteine, to avoid such errors it has two additional distinct editing activities against alanine. One activity is designated as 'pretransfer' editing and involves the tRNA(Pro)-independent hydrolysis of activated Ala-AMP. The other activity is designated 'posttransfer' editing and involves deacylation of mischarged Ala-tRNA(Pro). The misacylated Cys-tRNA(Pro) is not edited by ProRS. This chain is Proline--tRNA ligase, found in Synechocystis sp. (strain ATCC 27184 / PCC 6803 / Kazusa).